We begin with the raw amino-acid sequence, 521 residues long: uncharacterized protein (521 aa).

The disordered stretch occupies residues 1–25 (MLQRSLGVNGRKLAMSARSAKRERK). Helical transmembrane passes span 68–88 (GAVWVLPTFGVAIGLGSGAVL), 114–134 (VLIVVSATMITTIGIVFSLTV), 160–180 (VVLAIFACTFAYSTGGLHTVG), 192–212 (VAVTGSLALAFVSIAALIYFL), 290–310 (ALLVTFVGDYVTAGGLLGWCW), and 399–419 (LLFWLPYPSFATYLHVGCAQI).

Its subcellular location is the cell membrane. This is an uncharacterized protein from Mycobacterium bovis (strain ATCC BAA-935 / AF2122/97).